Consider the following 529-residue polypeptide: CTP synthase (529 aa).

Residues 1-267 form an amidoligase domain region; sequence MKEAKFIFVT…DTQILEHFHL (267 aa). A CTP-binding site is contributed by serine 15. Serine 15 is a binding site for UTP. ATP is bound by residues 16–21 and aspartate 73; that span reads SLGKGL. Residues aspartate 73 and glutamate 141 each contribute to the Mg(2+) site. CTP is bound by residues 148 to 150, 188 to 193, and lysine 224; these read DIE and KTKPTQ. UTP contacts are provided by residues 188-193 and lysine 224; that span reads KTKPTQ. A Glutamine amidotransferase type-1 domain is found at 292-529; that stretch reads TVSIVGKYTE…SFVKAAIDKK (238 aa). Glycine 354 contacts L-glutamine. Cysteine 381 (nucleophile; for glutamine hydrolysis) is an active-site residue. L-glutamine contacts are provided by residues 382 to 385, glutamate 405, and arginine 459; that span reads LGMQ. Active-site residues include histidine 504 and glutamate 506.

It belongs to the CTP synthase family. In terms of assembly, homotetramer.

It carries out the reaction UTP + L-glutamine + ATP + H2O = CTP + L-glutamate + ADP + phosphate + 2 H(+). The enzyme catalyses L-glutamine + H2O = L-glutamate + NH4(+). The catalysed reaction is UTP + NH4(+) + ATP = CTP + ADP + phosphate + 2 H(+). It participates in pyrimidine metabolism; CTP biosynthesis via de novo pathway; CTP from UDP: step 2/2. Allosterically activated by GTP, when glutamine is the substrate; GTP has no effect on the reaction when ammonia is the substrate. The allosteric effector GTP functions by stabilizing the protein conformation that binds the tetrahedral intermediate(s) formed during glutamine hydrolysis. Inhibited by the product CTP, via allosteric rather than competitive inhibition. Catalyzes the ATP-dependent amination of UTP to CTP with either L-glutamine or ammonia as the source of nitrogen. Regulates intracellular CTP levels through interactions with the four ribonucleotide triphosphates. This Wolbachia pipientis wMel protein is CTP synthase.